The following is a 750-amino-acid chain: Photosystem I P700 chlorophyll a apoprotein A1 (750 aa).

Transmembrane regions (helical) follow at residues 70 to 93, 156 to 179, 195 to 219, 291 to 309, 346 to 369, 385 to 411, 433 to 455, and 531 to 549; these read VFSA…FHGA, LYCT…FHYH, LNHH…HVSL, IAHH…GHMY, WHAQ…HHMY, LSLF…IFMV, AIIS…LYIH, and FLVH…LILL. Residues Cys573 and Cys582 each contribute to the [4Fe-4S] cluster site. 2 helical membrane-spanning segments follow: residues 589 to 610 and 664 to 686; these read HVFL…HFSW and LSAY…MFLF. His675 contacts chlorophyll a'. Positions 683 and 691 each coordinate chlorophyll a. Trp692 serves as a coordination point for phylloquinone. Residues 724-744 form a helical membrane-spanning segment; it reads AVGVTHYLLGGIATTWAFFLA.

Belongs to the PsaA/PsaB family. In terms of assembly, the PsaA/B heterodimer binds the P700 chlorophyll special pair and subsequent electron acceptors. PSI consists of a core antenna complex that captures photons, and an electron transfer chain that converts photonic excitation into a charge separation. The eukaryotic PSI reaction center is composed of at least 11 subunits. The cofactor is P700 is a chlorophyll a/chlorophyll a' dimer, A0 is one or more chlorophyll a, A1 is one or both phylloquinones and FX is a shared 4Fe-4S iron-sulfur center..

It localises to the plastid. It is found in the chloroplast thylakoid membrane. The enzyme catalyses reduced [plastocyanin] + hnu + oxidized [2Fe-2S]-[ferredoxin] = oxidized [plastocyanin] + reduced [2Fe-2S]-[ferredoxin]. PsaA and PsaB bind P700, the primary electron donor of photosystem I (PSI), as well as the electron acceptors A0, A1 and FX. PSI is a plastocyanin-ferredoxin oxidoreductase, converting photonic excitation into a charge separation, which transfers an electron from the donor P700 chlorophyll pair to the spectroscopically characterized acceptors A0, A1, FX, FA and FB in turn. Oxidized P700 is reduced on the lumenal side of the thylakoid membrane by plastocyanin. The chain is Photosystem I P700 chlorophyll a apoprotein A1 from Nasturtium officinale (Watercress).